The following is a 366-amino-acid chain: MEPRESGKQRVAVLFGGQSTEHEVSLRSSMNVIRAIDRQKYDLTLIGVDKHGRWTLCDEQDYLLNADNPAAIRLAPARCYLAVVPGQSGAQLIDAANGQPFPSIDVAFSVLHGASGEDGSVQGLLRVLNIPYAGPDVLGSAVCMDKDMTKRVLRDAGVPVTPSVTLLRTGDAAPDVDAIIGQLGLPLFIKPASQGSSVGVSKVTDRAGFAAALALAFRYDAKVLVEQGISGREIETAVLGNDSPEVSVCGEILANDEFYAYDTKYLKGAQAGLVIPAALPAPIADALRQMAREAYLALGCSVMARVDFFLTDQGQILLNEVNTLPGFTSISMYPKLWEASGLDYPALVDRLIVLARASARQNAEIR.

One can recognise an ATP-grasp domain in the interval 150–353 (KRVLRDAGVP…YPALVDRLIV (204 aa)). Residue 180 to 235 (IGQLGLPLFIKPASQGSSVGVSKVTDRAGFAAALALAFRYDAKVLVEQGISGREIE) participates in ATP binding. Residues Asp-307, Glu-320, and Asn-322 each contribute to the Mg(2+) site.

It belongs to the D-alanine--D-alanine ligase family. Mg(2+) serves as cofactor. Requires Mn(2+) as cofactor.

The protein resides in the cytoplasm. The catalysed reaction is 2 D-alanine + ATP = D-alanyl-D-alanine + ADP + phosphate + H(+). Its pathway is cell wall biogenesis; peptidoglycan biosynthesis. In terms of biological role, cell wall formation. This chain is D-alanine--D-alanine ligase, found in Sodalis glossinidius (strain morsitans).